Here is a 596-residue protein sequence, read N- to C-terminus: Proton channel OTOP3 (596 aa).

The segment covering 1-21 has biased composition (low complexity); sequence MGRGARAAAAQSRWGRASRAS. The interval 1-59 is disordered; that stretch reads MGRGARAAAAQSRWGRASRASVSPGRTIRSAPAVGEAQETEAAPEKENRVDVGAEERAA. Topologically, residues 1–88 are cytoplasmic; it reads MGRGARAAAA…RDRQAQKAGQ (88 aa). Phosphoserine is present on residues Ser-21 and Ser-23. Basic and acidic residues predominate over residues 43–59; it reads APEKENRVDVGAEERAA. The chain crosses the membrane as a helical span at residues 89 to 109; it reads LFSGLLALNVVFLGGAFICSM. Residues 110–119 are Extracellular-facing; that stretch reads IFNKVAVTLG. The helical transmembrane segment at 120-143 threads the bilayer; the sequence is DVWILLATLKVLSLLWLLYYVAST. Over 144-159 the chain is Cytoplasmic; it reads TRRPHAVLYQDPHAGP. The chain crosses the membrane as a helical span at residues 160–181; the sequence is LWVRGSLVLFGSCTFCLNIFRV. Residues 182–193 are Extracellular-facing; the sequence is GYDVSHIRCKSQ. A helical transmembrane segment spans residues 194 to 217; it reads LDLVFSVIEMVFIGVQTWVLWKHC. Topologically, residues 218–225 are cytoplasmic; sequence KDCVRVQT. The helical transmembrane segment at 226-248 threads the bilayer; the sequence is NFTRCGLMLTLATNLLLWVLAVT. Over 249-295 the chain is Extracellular; sequence NDSMHREIEAELGILMEKSTGNETNTCLCLNATACEAFRRGFLMLYP. The chain crosses the membrane as a helical span at residues 296-312; the sequence is FSTEYCLICCAVLFVMW. The Cytoplasmic portion of the chain corresponds to 313–338; that stretch reads KNVGRHVAPHMGAHPATAPFHLHGAI. The chain crosses the membrane as a helical span at residues 339–358; the sequence is FGPLLGLLVLLAGVCVFVLF. At 359 to 372 the chain is on the extracellular side; it reads QIEASGPAIACQYF. A helical membrane pass occupies residues 373–395; the sequence is TLYYAFYVAVLPTMSLACLAGTA. The Cytoplasmic portion of the chain corresponds to 396-413; it reads IHGLEERELDTVKNPTRS. The chain crosses the membrane as a helical span at residues 414–435; sequence LDVVLLMGAALGQMGIAYFSIV. The Extracellular segment spans residues 436–446; that stretch reads AIVAKRPHELL. A helical transmembrane segment spans residues 447–469; that stretch reads NRLILAYSLLLILQHIAQNLFII. Topologically, residues 470–529 are cytoplasmic; that stretch reads EGLHRRPLWETVPEGLAGKQEAEPPRRGSLLELGQGLQRASLAYIHSYSHLNWKRRALKE. Residues 530–547 form a helical membrane-spanning segment; sequence ISLFLILCNITLWMMPAF. The Extracellular portion of the chain corresponds to 548 to 566; the sequence is GIHPEFENGLEKDFYGYQI. A helical transmembrane segment spans residues 567-589; that stretch reads WFAIVNFGLPLGVFYRMHSVGGL. Over 590–596 the chain is Cytoplasmic; that stretch reads VEVYLGA.

This sequence belongs to the otopetrin family. In terms of assembly, homodimer.

Its subcellular location is the cell membrane. The catalysed reaction is H(+)(in) = H(+)(out). With respect to regulation, activated by extracellular acidification. Activated by Zn(2+) under non-acidic conditions. Its function is as follows. Proton-selective channel gated by extracellular protons. This Homo sapiens (Human) protein is Proton channel OTOP3.